The following is a 257-amino-acid chain: RING1 and YY1-binding protein B (257 aa).

Disordered stretches follow at residues 1–24 and 45–257; these read MGDKKSPTRPKRQAKPTADNGFWD and RKGT…DESF. A RanBP2-type zinc finger spans residues 19 to 48; the sequence is DNGFWDCSVCTFRNSAEAFKCSICDVRKGT. Residues 74–129 are compositionally biased toward basic and acidic residues; that stretch reads PKKEKKEKPERPEKDRAEEERPDINPPDEHPVEQRDKDKSEKEQPEKEKKDREKEI. Residues 149 to 168 show a composition bias toward polar residues; the sequence is HQSPPSERNSIQSGKSTTKT. Positions 169 to 178 are enriched in basic residues; it reads KNSHNSRPKL. Residues 209-233 are compositionally biased toward low complexity; the sequence is TSSTSSSTVTSSASSEQQHQSSGSE.

It localises to the nucleus. The protein resides in the cytoplasm. Functionally, may be implicated in the regulation of the transcription as a repressor of the transcriptional activity of E4TF1. The polypeptide is RING1 and YY1-binding protein B (rybpb) (Danio rerio (Zebrafish)).